Here is a 170-residue protein sequence, read N- to C-terminus: Protein SprT (170 aa).

One can recognise a SprT-like domain in the interval 22–163 (LQQANLTLQT…RCRRCGKTLR (142 aa)). Position 78 (histidine 78) interacts with Zn(2+). The active site involves glutamate 79. A Zn(2+)-binding site is contributed by histidine 82.

The protein belongs to the SprT family. The cofactor is Zn(2+).

The protein localises to the cytoplasm. The polypeptide is Protein SprT (Pectobacterium carotovorum subsp. carotovorum (strain PC1)).